A 460-amino-acid polypeptide reads, in one-letter code: MDSELMHSIVGSYHKPPERVFVPSFTQNEPSQNCHPANLEVTSPKILHSPNSQALILALKTLQEKIHRLELERTQAEDNLNILSREAAQYKKALENETNERNLAHQELIKQKKDISIQLSSAQSRCTLLEKQLEYTKRMVLNVEREKNMILEQQAQLQREKEQDQMKLYAKLEKLDVLEKECFRLTTTQKTAEDKIKHLEEKLKEEEHQRKLFQDKASELQTGLEISKIIMSSVSNLKHSKEKKKSSKKTKCIKRRPPWQICSKFGALPFVAEKMRQHRDPHILQKPFNVTETRCLPKPSRTTSWCKAIPPDSEKSISICDNLSELLMAMQDELDQMSMEHQELLKQMKETESHSVCDDIECELECLLKKMEIKGEQISKLKKHQDSVCKLQQKVQNSKMSEASGIQQEDSYPKGSKNIKNSPRKCLTDTNLFQKNSSFHPIRVHNLQMKLRRDDIMWEQ.

Ser-49 is modified (phosphoserine). 2 coiled-coil regions span residues 51-228 and 317-384; these read NSQA…EISK and ISIC…LKKH. Residues 399–410 are compositionally biased toward polar residues; that stretch reads KMSEASGIQQED. A disordered region spans residues 399–423; the sequence is KMSEASGIQQEDSYPKGSKNIKNSP.

This sequence belongs to the translokin family.

The protein localises to the cytoplasm. It is found in the cytoskeleton. Its subcellular location is the microtubule organizing center. It localises to the centrosome. Centrosomal protein which may be required for microtubule attachment to centrosomes. In Homo sapiens (Human), this protein is Centrosomal protein CEP57L1 (CEP57L1).